A 434-amino-acid chain; its full sequence is Glucose-6-phosphate 1-dehydrogenase (434 aa).

NADP(+) contacts are provided by residues 7–14 (GSSGDLAK), arginine 36, tyrosine 93, and lysine 112. Residues lysine 112, 137-141 (HYLLK), glutamate 175, and aspartate 193 contribute to the D-glucose 6-phosphate site. Residue histidine 198 is the Proton acceptor of the active site. Residues lysine 280 and lysine 285 each coordinate D-glucose 6-phosphate. Arginine 286 lines the NADP(+) pocket.

Belongs to the glucose-6-phosphate dehydrogenase family.

It carries out the reaction D-glucose 6-phosphate + NADP(+) = 6-phospho-D-glucono-1,5-lactone + NADPH + H(+). The protein operates within carbohydrate degradation; pentose phosphate pathway; D-ribulose 5-phosphate from D-glucose 6-phosphate (oxidative stage): step 1/3. In terms of biological role, catalyzes the rate-limiting step of the oxidative pentose-phosphate pathway, which represents a route for the dissimilation of carbohydrates besides glycolysis. The main function of this enzyme is to provide reducing power (NADPH) and pentose phosphates for fatty acid and nucleic acid synthesis. This chain is Glucose-6-phosphate 1-dehydrogenase (ZWF1), found in Encephalitozoon cuniculi (strain GB-M1) (Microsporidian parasite).